The primary structure comprises 102 residues: RxLR effector protein PexRD41 (102 aa).

Positions 1–21 are cleaved as a signal peptide; the sequence is MRSIFYFALAFAALTCSNASA. The short motif at 39–53 is the RxLR-dEER element; that stretch reads RSLRVAGQEAARGEE.

Belongs to the RxLR effector family. As to quaternary structure, interacts with host KRBP1.

It localises to the secreted. The protein resides in the host cytoplasm. The protein localises to the host nucleus. Its subcellular location is the host nucleolus. Functionally, effector that enhances P.infestans colonization of host plant leaves. During the early stages of P.infestans infection, interacts with and stabilizes host potato K-homology (KH) RNA-binding protein KRBP1, leading to its accumulation. In Phytophthora infestans (strain T30-4) (Potato late blight agent), this protein is RxLR effector protein PexRD41.